Reading from the N-terminus, the 385-residue chain is tRNA pseudouridine synthase D (385 aa).

D65 (nucleophile) is an active-site residue. Positions 143 to 345 (GCENYFGEQR…SDGVRKAFFK (203 aa)) constitute a TRUD domain.

It belongs to the pseudouridine synthase TruD family.

The enzyme catalyses uridine(13) in tRNA = pseudouridine(13) in tRNA. Functionally, responsible for synthesis of pseudouridine from uracil-13 in transfer RNAs. In Aquifex aeolicus (strain VF5), this protein is tRNA pseudouridine synthase D.